The sequence spans 239 residues: 1-(5-phosphoribosyl)-5-[(5-phosphoribosylamino)methylideneamino] imidazole-4-carboxamide isomerase (239 aa).

D8 (proton acceptor) is an active-site residue. D129 (proton donor) is an active-site residue.

Belongs to the HisA/HisF family.

The protein localises to the cytoplasm. It catalyses the reaction 1-(5-phospho-beta-D-ribosyl)-5-[(5-phospho-beta-D-ribosylamino)methylideneamino]imidazole-4-carboxamide = 5-[(5-phospho-1-deoxy-D-ribulos-1-ylimino)methylamino]-1-(5-phospho-beta-D-ribosyl)imidazole-4-carboxamide. It functions in the pathway amino-acid biosynthesis; L-histidine biosynthesis; L-histidine from 5-phospho-alpha-D-ribose 1-diphosphate: step 4/9. In Bacillus anthracis (strain A0248), this protein is 1-(5-phosphoribosyl)-5-[(5-phosphoribosylamino)methylideneamino] imidazole-4-carboxamide isomerase.